We begin with the raw amino-acid sequence, 338 residues long: tRNA-specific 2-thiouridylase MnmA (338 aa).

Residues 6–13 (ALSGGVDS) and methionine 32 contribute to the ATP site. The active-site Nucleophile is cysteine 92. A disulfide bridge links cysteine 92 with cysteine 186. Glycine 116 is an ATP binding site. Positions 134–136 (KDQ) are interaction with tRNA. Cysteine 186 acts as the Cysteine persulfide intermediate in catalysis. The segment at 288–289 (RY) is interaction with tRNA.

This sequence belongs to the MnmA/TRMU family.

It is found in the cytoplasm. It catalyses the reaction S-sulfanyl-L-cysteinyl-[protein] + uridine(34) in tRNA + AH2 + ATP = 2-thiouridine(34) in tRNA + L-cysteinyl-[protein] + A + AMP + diphosphate + H(+). Functionally, catalyzes the 2-thiolation of uridine at the wobble position (U34) of tRNA, leading to the formation of s(2)U34. This Campylobacter fetus subsp. fetus (strain 82-40) protein is tRNA-specific 2-thiouridylase MnmA.